The sequence spans 293 residues: ATP phosphoribosyltransferase (293 aa).

The protein belongs to the ATP phosphoribosyltransferase family. Long subfamily. Mg(2+) serves as cofactor.

The protein resides in the cytoplasm. It catalyses the reaction 1-(5-phospho-beta-D-ribosyl)-ATP + diphosphate = 5-phospho-alpha-D-ribose 1-diphosphate + ATP. The protein operates within amino-acid biosynthesis; L-histidine biosynthesis; L-histidine from 5-phospho-alpha-D-ribose 1-diphosphate: step 1/9. Its activity is regulated as follows. Feedback inhibited by histidine. Functionally, catalyzes the condensation of ATP and 5-phosphoribose 1-diphosphate to form N'-(5'-phosphoribosyl)-ATP (PR-ATP). Has a crucial role in the pathway because the rate of histidine biosynthesis seems to be controlled primarily by regulation of HisG enzymatic activity. In Nitratidesulfovibrio vulgaris (strain ATCC 29579 / DSM 644 / CCUG 34227 / NCIMB 8303 / VKM B-1760 / Hildenborough) (Desulfovibrio vulgaris), this protein is ATP phosphoribosyltransferase.